The sequence spans 143 residues: Ribosomal RNA large subunit methyltransferase H (143 aa).

S-adenosyl-L-methionine-binding residues include Leu68 and Gly95.

This sequence belongs to the RNA methyltransferase RlmH family. Homodimer.

It localises to the cytoplasm. It catalyses the reaction pseudouridine(1915) in 23S rRNA + S-adenosyl-L-methionine = N(3)-methylpseudouridine(1915) in 23S rRNA + S-adenosyl-L-homocysteine + H(+). In terms of biological role, specifically methylates the pseudouridine at position 1915 (m3Psi1915) in 23S rRNA. The polypeptide is Ribosomal RNA large subunit methyltransferase H (Mycoplasma mobile (strain ATCC 43663 / 163K / NCTC 11711) (Mesomycoplasma mobile)).